A 312-amino-acid chain; its full sequence is Ribonuclease HIII (312 aa).

The 217-residue stretch at Phe-95–Pro-311 folds into the RNase H type-2 domain. Residues Asp-101, Glu-102, and Asp-206 each coordinate a divalent metal cation.

This sequence belongs to the RNase HII family. RnhC subfamily. Requires Mn(2+) as cofactor. The cofactor is Mg(2+).

It localises to the cytoplasm. The enzyme catalyses Endonucleolytic cleavage to 5'-phosphomonoester.. Functionally, endonuclease that specifically degrades the RNA of RNA-DNA hybrids. The chain is Ribonuclease HIII from Staphylococcus aureus (strain MW2).